The primary structure comprises 132 residues: Large ribosomal subunit protein bL17 (132 aa).

Belongs to the bacterial ribosomal protein bL17 family. As to quaternary structure, part of the 50S ribosomal subunit. Contacts protein L32.

This Anaplasma phagocytophilum (strain HZ) protein is Large ribosomal subunit protein bL17.